Consider the following 307-residue polypeptide: Haloalkane dehalogenase (307 aa).

The AB hydrolase-1 domain maps to 34 to 158; sequence PVLFLHGNPT…FQAFRTADVG (125 aa). The active-site Nucleophile is the D106. E130 (proton donor) is an active-site residue. H272 (proton acceptor) is an active-site residue.

The protein belongs to the haloalkane dehalogenase family. Type 2 subfamily. In terms of assembly, monomer.

It carries out the reaction 1-haloalkane + H2O = a halide anion + a primary alcohol + H(+). It functions in the pathway xenobiotic degradation; 1,2-dibromoethane degradation. Functionally, catalyzes hydrolytic cleavage of carbon-halogen bonds in halogenated aliphatic compounds, leading to the formation of the corresponding primary alcohols, halide ions and protons. Has a broad substrate specificity, which includes mono- and di-chlorinated and brominated alkanes. The highest activity was found with 1,2-dibromoethane, whereas low activity was measured with the analog 1,2-dichloroethane. The protein is Haloalkane dehalogenase (dhaAF) of Mycobacterium sp. (strain GP1).